A 234-amino-acid polypeptide reads, in one-letter code: Glucosamine-6-phosphate deaminase (234 aa).

Asp-62 acts as the Proton acceptor; for enolization step in catalysis. Asn-128 (for ring-opening step) is an active-site residue. His-130 (proton acceptor; for ring-opening step) is an active-site residue. Residue Glu-135 is the For ring-opening step of the active site.

This sequence belongs to the glucosamine/galactosamine-6-phosphate isomerase family. NagB subfamily.

The catalysed reaction is alpha-D-glucosamine 6-phosphate + H2O = beta-D-fructose 6-phosphate + NH4(+). Its pathway is amino-sugar metabolism; N-acetylneuraminate degradation; D-fructose 6-phosphate from N-acetylneuraminate: step 5/5. Its function is as follows. Catalyzes the reversible isomerization-deamination of glucosamine 6-phosphate (GlcN6P) to form fructose 6-phosphate (Fru6P) and ammonium ion. The polypeptide is Glucosamine-6-phosphate deaminase (Streptococcus equi subsp. zooepidemicus (strain H70)).